The following is a 759-amino-acid chain: Multifunctional tryptophan biosynthesis protein (759 aa).

Residues 27–223 (PIVMIDNYDS…LNLTAGTWEE (197 aa)) form the Glutamine amidotransferase type-1 domain. 80–82 (GPG) serves as a coordination point for L-glutamine. C108 (nucleophile; for GATase activity) is an active-site residue. L-glutamine-binding positions include Q112 and 158–159 (SL). Residues H197 and E199 each act as for GATase activity in the active site. The segment at 257–519 (ILEKIHAQRL…DPAAFARELL (263 aa)) is indole-3-glycerol phosphate synthase. An N-(5'-phosphoribosyl)anthranilate isomerase region spans residues 536-759 (LVKVCGTRSL…KAFINAVKEL (224 aa)).

The enzyme catalyses N-(5-phospho-beta-D-ribosyl)anthranilate = 1-(2-carboxyphenylamino)-1-deoxy-D-ribulose 5-phosphate. It catalyses the reaction 1-(2-carboxyphenylamino)-1-deoxy-D-ribulose 5-phosphate + H(+) = (1S,2R)-1-C-(indol-3-yl)glycerol 3-phosphate + CO2 + H2O. It carries out the reaction chorismate + L-glutamine = anthranilate + pyruvate + L-glutamate + H(+). It functions in the pathway amino-acid biosynthesis; L-tryptophan biosynthesis; L-tryptophan from chorismate: step 1/5. It participates in amino-acid biosynthesis; L-tryptophan biosynthesis; L-tryptophan from chorismate: step 3/5. Its pathway is amino-acid biosynthesis; L-tryptophan biosynthesis; L-tryptophan from chorismate: step 4/5. In terms of biological role, trifunctional enzyme bearing the Gln amidotransferase (GATase) domain of anthranilate synthase, indole-glycerolphosphate synthase, and phosphoribosylanthranilate isomerase activities. The sequence is that of Multifunctional tryptophan biosynthesis protein (trp1) from Schizosaccharomyces pombe (strain 972 / ATCC 24843) (Fission yeast).